Reading from the N-terminus, the 96-residue chain is Small ribosomal subunit protein bS21 (96 aa).

The segment covering 37–52 has biased composition (basic and acidic residues); the sequence is EKPSEKKAREKAEAVR. Residues 37–96 are disordered; sequence EKPSEKKAREKAEAVRRARKLARKKLQREGLLPSKPKPVFGADRGRGAAGGAGGAPRPAR. The span at 53-62 shows a compositional bias: basic residues; the sequence is RARKLARKKL.

Belongs to the bacterial ribosomal protein bS21 family.

In Afipia carboxidovorans (strain ATCC 49405 / DSM 1227 / KCTC 32145 / OM5) (Oligotropha carboxidovorans), this protein is Small ribosomal subunit protein bS21.